The sequence spans 269 residues: uncharacterized protein (269 aa).

In terms of domain architecture, HTH gntR-type spans 5 to 73 (APKWRELADR…RGHGTVVRRK (69 aa)). Positions 33–52 (IRDLVEAGEGSKETVHRAYK) form a DNA-binding region, H-T-H motif.

The imp locus inhibits the extrachromosomal maintenance of the Streptomyces plasmid SLP1. This is an uncharacterized protein from Streptomyces coelicolor (strain ATCC BAA-471 / A3(2) / M145).